We begin with the raw amino-acid sequence, 498 residues long: ATP synthase subunit beta, chloroplastic (498 aa).

172-179 (GGAGVGKT) contributes to the ATP binding site.

Belongs to the ATPase alpha/beta chains family. F-type ATPases have 2 components, CF(1) - the catalytic core - and CF(0) - the membrane proton channel. CF(1) has five subunits: alpha(3), beta(3), gamma(1), delta(1), epsilon(1). CF(0) has four main subunits: a(1), b(1), b'(1) and c(9-12).

It localises to the plastid. Its subcellular location is the chloroplast thylakoid membrane. The catalysed reaction is ATP + H2O + 4 H(+)(in) = ADP + phosphate + 5 H(+)(out). Functionally, produces ATP from ADP in the presence of a proton gradient across the membrane. The catalytic sites are hosted primarily by the beta subunits. The protein is ATP synthase subunit beta, chloroplastic of Platanus occidentalis (Sycamore).